The chain runs to 520 residues: Polycomb protein PHO (520 aa).

4 C2H2-type zinc fingers span residues 357 to 381, 386 to 408, 414 to 438, and 444 to 468; these read IACPHKGCNKHFRDSSAMRKHLHTH, HVCAECGKAFVESSKLKRHQLVH, FQCTFEGCGKRFSLDFNLRTHVRIH, and FVCPFDACNKKFAQSTNLKSHILTH. Residues 475-497 are disordered; that stretch reads TSISGKSGCSNAESNSQSEDTSA.

Component of the Esc/E(z) complex, composed of Esc, E(z), Su(z)12, HDAC1/Rpd3 and Caf1-55. This complex is distinct from the PRC1 complex, which contains many other PcG proteins like Pc, Ph, Psc, Su(z)2. The two complexes however cooperate and interact together during the first 3 hours of development to establish PcG silencing. Component of the chromatin remodeling Ino80 complex. Interacts with Sfmbt to form a pho-repressive complex (PhoRC).

It is found in the nucleus. Its function is as follows. Polycomb group (PcG) protein that binds to the 5'-CNGCCATNNNNG-3' sequence found in the regulatory regions of many genes. PcG proteins act by forming multiprotein complexes, which are required to maintain the transcriptionally repressive state of homeotic genes throughout development. PcG proteins are not required to initiate repression, but to maintain it during later stages of development. They probably act via the methylation of histones, rendering chromatin heritably changed in its expressibility. Probably targets the Esc/E(z) complex to DNA. Necessary but not sufficient to recruit a functional PcG repressive complex that represses target genes, suggesting that the recruitment of the distinct PRC1 complex is also required to allow a subsequent repression. Functionally, proposed core component of the chromatin remodeling Ino80 complex which is involved in transcriptional regulation, DNA replication and probably DNA repair. The sequence is that of Polycomb protein PHO (pho) from Drosophila melanogaster (Fruit fly).